The following is a 375-amino-acid chain: MDIGRKIELITKRPTEELLTVENLRHLLEIGAPMQHYIGFEISGYIHLGTGLMAGAKIADLQKAGIKTRIFLADWHSWINDKLGGDLEIIQKVALTYFKEGMKQSIKVMGGDPDKVEFVLASEILEKGDYWQTVIDISKNVTLARMMRSITIMGRQMGEAIDFAKLIYPAMQVADIFYQGVTIAHAGMDQRKAHVIAIEVAQKLKYHAIEHNGEKLKPVALHHHLLLGLQEPPVWPIESEEQYKELKTQMKMSKSKPYSAVFIHDTPEEIKQKLRKAFCPAREVKYNPVLDWAEYIIFREEPTEFTIHRPAKFGGDVTYTTFEELKRDFAEGKLHPLDLKNAVAEYLIELLKPVRDYFEKHPEPLELMREIKITR.

Positions 37, 168, 172, 175, and 190 each coordinate L-tyrosine. The short motif at 251-255 is the 'KMSKS' region element; sequence KMSKS. An ATP-binding site is contributed by Lys254.

Belongs to the class-I aminoacyl-tRNA synthetase family. TyrS type 4 subfamily. Homodimer.

It is found in the cytoplasm. It catalyses the reaction tRNA(Tyr) + L-tyrosine + ATP = L-tyrosyl-tRNA(Tyr) + AMP + diphosphate + H(+). In terms of biological role, catalyzes the attachment of tyrosine to tRNA(Tyr) in a two-step reaction: tyrosine is first activated by ATP to form Tyr-AMP and then transferred to the acceptor end of tRNA(Tyr). This chain is Tyrosine--tRNA ligase, found in Thermococcus onnurineus (strain NA1).